A 420-amino-acid polypeptide reads, in one-letter code: RING finger protein 39 (420 aa).

The RING-type zinc-finger motif lies at 88-135; it reads CPLCGGSFEDPVLLACEHSFCRACLARRWGTPPATDTEASPTACPCCG. 2 disordered regions span residues 166 to 186 and 246 to 265; these read PGAR…CLDP and DRRS…DGPK. Residues 210 to 420 form the B30.2/SPRY domain; sequence DDLPEDYPVV…APLRIVPAES (211 aa).

It localises to the cytoplasm. The catalysed reaction is S-ubiquitinyl-[E2 ubiquitin-conjugating enzyme]-L-cysteine + [acceptor protein]-L-lysine = [E2 ubiquitin-conjugating enzyme]-L-cysteine + N(6)-ubiquitinyl-[acceptor protein]-L-lysine.. Its pathway is protein modification; protein ubiquitination. Plays an inhibitory role in anti-RNA viral innate immunity by targeting the adapter DDX3X and promoting its 'Lys-48'-linked polyubiquitination. Alternatively, enhances the cGAS-STING pathway activation by promoting 'Lys-63'-linked ubiquitination of STING1, facilitating the STING1-TBK1 complex formation and STING1 activation. In Macaca mulatta (Rhesus macaque), this protein is RING finger protein 39 (RNF39).